We begin with the raw amino-acid sequence, 176 residues long: Lactoylglutathione lyase (176 aa).

Positions 23–167 (VFNHTMLRVK…DGYWVEIVQA (145 aa)) constitute a VOC domain. Position 26 (H26) interacts with Ni(2+). R30 is a substrate binding site. E92 is a binding site for Ni(2+). N96, R114, and H118 together coordinate substrate. Residues H118 and E163 each coordinate Ni(2+). Residue E163 is the Proton donor/acceptor of the active site.

It belongs to the glyoxalase I family. In terms of assembly, monomer. It depends on Ni(2+) as a cofactor. Requires Zn(2+) as cofactor.

The enzyme catalyses (R)-S-lactoylglutathione = methylglyoxal + glutathione. Its pathway is secondary metabolite metabolism; methylglyoxal degradation; (R)-lactate from methylglyoxal: step 1/2. Functionally, catalyzes the conversion of hemimercaptal, formed from methylglyoxal and glutathione, to S-lactoylglutathione. This Pseudomonas aeruginosa (strain ATCC 15692 / DSM 22644 / CIP 104116 / JCM 14847 / LMG 12228 / 1C / PRS 101 / PAO1) protein is Lactoylglutathione lyase (gloA).